Reading from the N-terminus, the 275-residue chain is Bis(5'-nucleosyl)-tetraphosphatase, symmetrical (275 aa).

This sequence belongs to the Ap4A hydrolase family.

It catalyses the reaction P(1),P(4)-bis(5'-adenosyl) tetraphosphate + H2O = 2 ADP + 2 H(+). Hydrolyzes diadenosine 5',5'''-P1,P4-tetraphosphate to yield ADP. This Marinomonas sp. (strain MWYL1) protein is Bis(5'-nucleosyl)-tetraphosphatase, symmetrical.